The chain runs to 569 residues: Dolichol kinase EVAN (569 aa).

The Cytoplasmic portion of the chain corresponds to 1-22 (MKTTATSFVTGERVVVFVVVSR). Residues 23–43 (ILLSLPLSLISHGFSLFLLSL) traverse the membrane as a helical segment. The Lumenal portion of the chain corresponds to 44–67 (SAFLVEIRVETSPFLLSHFSSRRG). Residues 68 to 88 (ASSGILLGAVTLPSVMISKLV) form a helical membrane-spanning segment. Residues 89-108 (QLSRAISIHEAEQDELAHVT) are Cytoplasmic-facing. Residues 109-129 (MQYWAASASCCAILIYLSVIM) traverse the membrane as a helical segment. The Lumenal segment spans residues 130–147 (SQVRKDESLSSSSIWLTR). The chain crosses the membrane as a helical span at residues 148 to 168 (VSLTGTVLYGVACFVSLSMIS). At 169 to 178 (HTGLNTSLKM) the chain is on the cytoplasmic side. Residues 179–199 (LWMLFHGLAAVKLIRHLLCTF) form a helical membrane-spanning segment. Over 200–207 (PSCASIGE) the chain is Lumenal. Residues 208 to 228 (ALLVTSGLVLYFGDFLACTIA) form a helical membrane-spanning segment. Residues 229 to 252 (KIFEKLIPVDLVSISYGIKRTETG) are Cytoplasmic-facing. Residues 253-273 (IIVQGLLLGLLLFPMVFRFVL) traverse the membrane as a helical segment. Residues 274-296 (HIYESSLRKRDARQRNCSDAAKS) lie on the Lumenal side of the membrane. Residue N289 is glycosylated (N-linked (GlcNAc...) asparagine). The chain crosses the membrane as a helical span at residues 297-317 (VLFFVSLLFFMVVAVPSWMQF). Residues 318-340 (VHDFNQHPFLWVLTFVFSEPLKR) lie on the Cytoplasmic side of the membrane. The helical transmembrane segment at 341–361 (LSLCIYWILLIVVSVSRFYNI) threads the bilayer. Over 362-369 (SRSSKVER) the chain is Lumenal. A helical transmembrane segment spans residues 370 to 390 (ILLRKYYHLMAVLMFLPALVL). Topologically, residues 391 to 393 (QPK) are cytoplasmic. The helical transmembrane segment at 394–414 (FLDLAFGAALAVFVALEIIRI) threads the bilayer. At 415 to 440 (WRIQPLGEPLHQFMNAFTDHRDSEHL) the chain is on the lumenal side. The helical transmembrane segment at 441–461 (IVSHFSLLLGCALPIWMSSGF) threads the bilayer. The Cytoplasmic portion of the chain corresponds to 462 to 464 (NDR). The chain crosses the membrane as a helical span at residues 465–485 (ALSPFAGILSLGIGDTMASMV). The Lumenal segment spans residues 486-508 (GHKYGVLRWSKTGKKTVEGTAAG). The tract at residues 487-503 (HKYGVLRWSKTGKKTVE) is CTP-binding. A helical transmembrane segment spans residues 509-529 (ITSMMAVCFVLVPILASMGYI). The Cytoplasmic portion of the chain corresponds to 530–548 (LSQGWWSLLVAVTATGMLE). A helical membrane pass occupies residues 549–569 (AYTAQLDNAFIPLVFYSLLCL).

This sequence belongs to the polyprenol kinase family.

The protein localises to the endoplasmic reticulum membrane. The enzyme catalyses a di-trans,poly-cis-dolichol + CTP = a di-trans,poly-cis-dolichyl phosphate + CDP + H(+). Essential for pollen development. Involved in protein N-glycosylation in the endoplasmic reticulum (ER), especially in the female gametophyte. Mediates pollen tube (PT) reception in synergids through protein glycosylation. The chain is Dolichol kinase EVAN from Arabidopsis thaliana (Mouse-ear cress).